A 218-amino-acid chain; its full sequence is MAFKDTFNKMISYFDTDEVNEVEEDVAASTDNVIPRSQQSVRASSHPKQEPRNNHVQQDHQARSQEQTRSQMHPKHGTSERYYQQSQPKEGHEMVDRRKRMSTSGIANRREQYQQSTCSDQTTIALKYPRKYEDAQEIVDLLIVNECVLIDFQFMLDAQARRCLDFIDGASKVLYGSLQKVGSSMYLLAPSNVSVNIEEMTIPHTTQDIGFDFDMKRR.

Positions 25–115 (DVAASTDNVI…IANRREQYQQ (91 aa)) are disordered. Residues 29–43 (STDNVIPRSQQSVRA) show a composition bias toward polar residues. Residues 47–63 (PKQEPRNNHVQQDHQAR) show a composition bias toward basic and acidic residues.

This sequence belongs to the SepF family. Homodimer. Interacts with FtsZ.

It localises to the cytoplasm. Its function is as follows. Cell division protein that is part of the divisome complex and is recruited early to the Z-ring. Probably stimulates Z-ring formation, perhaps through the cross-linking of FtsZ protofilaments. Its function overlaps with FtsA. The chain is Cell division protein SepF from Streptococcus pyogenes serotype M12 (strain MGAS2096).